The chain runs to 477 residues: Histidine--tRNA ligase (477 aa).

It belongs to the class-II aminoacyl-tRNA synthetase family. As to quaternary structure, homodimer.

It localises to the cytoplasm. The catalysed reaction is tRNA(His) + L-histidine + ATP = L-histidyl-tRNA(His) + AMP + diphosphate + H(+). The chain is Histidine--tRNA ligase from Xanthomonas campestris pv. campestris (strain 8004).